The following is a 304-amino-acid chain: UDP-3-O-acyl-N-acetylglucosamine deacetylase (304 aa).

The Zn(2+) site is built by His-78, His-237, and Asp-241. His-264 functions as the Proton donor in the catalytic mechanism.

It belongs to the LpxC family. The cofactor is Zn(2+).

The catalysed reaction is a UDP-3-O-[(3R)-3-hydroxyacyl]-N-acetyl-alpha-D-glucosamine + H2O = a UDP-3-O-[(3R)-3-hydroxyacyl]-alpha-D-glucosamine + acetate. It participates in glycolipid biosynthesis; lipid IV(A) biosynthesis; lipid IV(A) from (3R)-3-hydroxytetradecanoyl-[acyl-carrier-protein] and UDP-N-acetyl-alpha-D-glucosamine: step 2/6. In terms of biological role, catalyzes the hydrolysis of UDP-3-O-myristoyl-N-acetylglucosamine to form UDP-3-O-myristoylglucosamine and acetate, the committed step in lipid A biosynthesis. The protein is UDP-3-O-acyl-N-acetylglucosamine deacetylase of Acidithiobacillus ferrooxidans (strain ATCC 53993 / BNL-5-31) (Leptospirillum ferrooxidans (ATCC 53993)).